Reading from the N-terminus, the 311-residue chain is Ornithine carbamoyltransferase (311 aa).

Residues 59-62 (STRT), Gln-86, Arg-110, and 137-140 (HPCQ) each bind carbamoyl phosphate. L-ornithine is bound by residues Asn-168, Asp-228, and 232 to 233 (SM). Residues 267–268 (CL) and Arg-295 contribute to the carbamoyl phosphate site.

It belongs to the aspartate/ornithine carbamoyltransferase superfamily. OTCase family.

The protein resides in the cytoplasm. It carries out the reaction carbamoyl phosphate + L-ornithine = L-citrulline + phosphate + H(+). Its pathway is amino-acid biosynthesis; L-arginine biosynthesis; L-arginine from L-ornithine and carbamoyl phosphate: step 1/3. Functionally, reversibly catalyzes the transfer of the carbamoyl group from carbamoyl phosphate (CP) to the N(epsilon) atom of ornithine (ORN) to produce L-citrulline. The polypeptide is Ornithine carbamoyltransferase (Caulobacter vibrioides (strain ATCC 19089 / CIP 103742 / CB 15) (Caulobacter crescentus)).